A 199-amino-acid polypeptide reads, in one-letter code: Peroxiredoxin-1 (199 aa).

Positions 6 to 165 (AFIGKPAPDF…TLRLVQAFQF (160 aa)) constitute a Thioredoxin domain. Cys52 acts as the Cysteine sulfenic acid (-SOH) intermediate in catalysis.

Belongs to the peroxiredoxin family. AhpC/Prx1 subfamily. Homodimer; disulfide-linked, upon oxidation. 5 homodimers assemble to form a ring-like decamer. Interacts with GDPD5; forms a mixed-disulfide with GDPD5. Interacts with SESN1 and SESN2. The enzyme can be inactivated by further oxidation of the cysteine sulfenic acid (C(P)-SOH) to sulphinic acid (C(P)-SO2H) instead of its condensation to a disulfide bond. It can be reactivated by forming a transient disulfide bond with sulfiredoxin SRXN1, which reduces the cysteine sulfinic acid in an ATP- and Mg-dependent manner.

It localises to the cytoplasm. It carries out the reaction a hydroperoxide + [thioredoxin]-dithiol = an alcohol + [thioredoxin]-disulfide + H2O. Thiol-specific peroxidase that catalyzes the reduction of hydrogen peroxide and organic hydroperoxides to water and alcohols, respectively. Plays a role in cell protection against oxidative stress by detoxifying peroxides and as sensor of hydrogen peroxide-mediated signaling events. Might participate in the signaling cascades of growth factors and tumor necrosis factor-alpha by regulating the intracellular concentrations of H(2)O(2). Reduces an intramolecular disulfide bond in GDPD5 that gates the ability to GDPD5 to drive postmitotic motor neuron differentiation. The polypeptide is Peroxiredoxin-1 (PRDX1) (Gallus gallus (Chicken)).